Here is a 138-residue protein sequence, read N- to C-terminus: Small ribosomal subunit protein uS11c (138 aa).

Residues 1 to 23 (MAKAIPRVGSRKNGRISSRKSAR) are disordered. Positions 9 to 23 (GSRKNGRISSRKSAR) are enriched in basic residues.

It belongs to the universal ribosomal protein uS11 family. In terms of assembly, part of the 30S ribosomal subunit.

Its subcellular location is the plastid. The protein localises to the chloroplast. The sequence is that of Small ribosomal subunit protein uS11c from Coffea arabica (Arabian coffee).